Consider the following 301-residue polypeptide: Protoheme IX farnesyltransferase (301 aa).

Transmembrane regions (helical) follow at residues 20–42, 55–75, 105–125, 126–146, 150–172, 176–198, 227–247, 249–269, and 280–300; these read FTEL…GMWL, VDVI…SGAF, ALMV…MTTW, QAGV…SLYA, LVSN…WFAV, FSIV…FYAI, MFFW…LGLV, VILA…GFKM, and FVYS…ISIF.

The protein belongs to the UbiA prenyltransferase family. Protoheme IX farnesyltransferase subfamily. In terms of assembly, interacts with CtaA.

The protein localises to the cell membrane. The catalysed reaction is heme b + (2E,6E)-farnesyl diphosphate + H2O = Fe(II)-heme o + diphosphate. Its pathway is porphyrin-containing compound metabolism; heme O biosynthesis; heme O from protoheme: step 1/1. Converts heme B (protoheme IX) to heme O by substitution of the vinyl group on carbon 2 of heme B porphyrin ring with a hydroxyethyl farnesyl side group. In Listeria innocua serovar 6a (strain ATCC BAA-680 / CLIP 11262), this protein is Protoheme IX farnesyltransferase.